We begin with the raw amino-acid sequence, 217 residues long: MQIYNPISPVKTMVKIYPHLAFPVDMDVVQDKILPYLTTEQERFTIWMKSLVFNSKGCTVFDSKGNLIYRVDNYDSKSWSNEVYFMDLNGKILFTLRQKKLGFFKSWEGYNSTGTRFRLRKIFKILPRESSSSYKVVMGSRIVDGDQQSCYKIVNRGSVFAIKDGSGRLMAEVKNKLSDISGLDLGDDVLTMMVEPQLDHSLIMGIVIAYKLTKCKL.

Belongs to the LOR family.

Its function is as follows. Might be related to the phospholipid scramblase and tubby-like superfamily of membrane tethered transcription factors. The chain is Protein LURP-one-related 2 from Arabidopsis thaliana (Mouse-ear cress).